The sequence spans 72 residues: Long neurotoxin OH-5 (72 aa).

Disulfide bonds link Cys-3-Cys-22, Cys-15-Cys-43, Cys-28-Cys-32, Cys-47-Cys-58, and Cys-59-Cys-64.

The protein belongs to the three-finger toxin family. Long-chain subfamily. Type II alpha-neurotoxin sub-subfamily. In terms of tissue distribution, expressed by the venom gland.

Its subcellular location is the secreted. Binds with high affinity to muscular (alpha-1/CHRNA1) and neuronal (alpha-7/CHRNA7) nicotinic acetylcholine receptor (nAChR) and inhibits acetylcholine from binding to the receptor, thereby impairing neuromuscular and neuronal transmission. The polypeptide is Long neurotoxin OH-5 (Ophiophagus hannah (King cobra)).